Consider the following 287-residue polypeptide: tRNA N(3)-cytidine methyltransferase METTL6 (287 aa).

W45, Y49, G87, D110, D136, L137, and I157 together coordinate S-adenosyl-L-methionine. Residues 267-287 are disordered; the sequence is RKPPKDPAPTTDSASLLRKEF.

The protein belongs to the methyltransferase superfamily. METL family. In terms of assembly, monomer. Interacts with SARS1/SerRS; interaction is mediated via tRNA(Ser) and is required for N(3)-methylcytidine methylation.

The protein resides in the cytoplasm. Its subcellular location is the nucleus. It carries out the reaction cytidine(32) in tRNA(Ser) + S-adenosyl-L-methionine = N(3)-methylcytidine(32) in tRNA(Ser) + S-adenosyl-L-homocysteine + H(+). Functionally, S-adenosyl-L-methionine-dependent methyltransferase that mediates N(3)-methylcytidine modification of residue 32 of the tRNA anticodon loop of tRNA(Ser), including tRNA(Ser)(UGA) and tRNA(Ser)(GCU). Interaction with SARS1/SerRS is required for N(3)-methylcytidine methylation. This is tRNA N(3)-cytidine methyltransferase METTL6 (Mettl6) from Rattus norvegicus (Rat).